A 421-amino-acid polypeptide reads, in one-letter code: MSKTHLTEQKFSDFALHPAVIEALEKKGFHNCTPIQALALPLTLEGRDVAGQAQTGTGKTMAFLTSTFHYLLSHPAIADRQVNQPRALIMAPTRELAVQIHADAEPLAQATGLKLGLAYGGDGYDKQLKVLESGVDILIGTTGRLIDYAKQNHINLGAIQVVVLDEADRMYDLGFIKDIRWLFRRMPPATQRLNMLFSATLSYRVRELAFEQMNNAEYVEVEPEQKTGHRIKEELFYPSNEEKMRLLQTLLEEEWPDRAIIFANTKHRCEDIWGHLAADGHRVGLLTGDVAQKKRLRILDEFTRGDLDILVATDVAARGLHIPAVTHVFNYDLPDDCEDYVHRIGRTGRAGASGNSISLACEEYALNLPAIETYIGHSIPVSKYNPDALMTDLPKPLRLTRARPGNGPRRNGPPRNRRRSG.

Residues 9–37 carry the Q motif motif; that stretch reads QKFSDFALHPAVIEALEKKGFHNCTPIQA. Positions 40–219 constitute a Helicase ATP-binding domain; that stretch reads LPLTLEGRDV…FEQMNNAEYV (180 aa). 53–60 lines the ATP pocket; it reads AQTGTGKT. The DEAD box signature appears at 165-168; the sequence is DEAD. The region spanning 245–390 is the Helicase C-terminal domain; it reads RLLQTLLEEE…VSKYNPDALM (146 aa). Positions 396-421 are disordered; that stretch reads PLRLTRARPGNGPRRNGPPRNRRRSG. The span at 403-414 shows a compositional bias: low complexity; it reads RPGNGPRRNGPP.

It belongs to the DEAD box helicase family. RhlB subfamily. In terms of assembly, component of the RNA degradosome, which is a multiprotein complex involved in RNA processing and mRNA degradation.

Its subcellular location is the cytoplasm. It carries out the reaction ATP + H2O = ADP + phosphate + H(+). Functionally, DEAD-box RNA helicase involved in RNA degradation. Has RNA-dependent ATPase activity and unwinds double-stranded RNA. The polypeptide is ATP-dependent RNA helicase RhlB (Klebsiella pneumoniae (strain 342)).